The primary structure comprises 340 residues: CRISPR-associated protein Cas7 (340 aa).

As to quaternary structure, component of the Cascade-like complex (Cascade I-B), composed of Cas5, Cas6, Cas7 and crRNA.

It is found in the cytoplasm. In terms of biological role, CRISPR (clustered regularly interspaced short palindromic repeat) is an adaptive immune system that provides protection against mobile genetic elements (viruses, transposable elements and conjugative plasmids). CRISPR clusters contain sequences complementary to antecedent mobile elements and target invading nucleic acids. CRISPR clusters are transcribed and processed into CRISPR RNA (crRNA). Plasmid targeted by CRISPR locus P1 transform wild-type cells very poorly. This protein helps process or stabilize pre-crRNA into individual crRNA units, in vivo Cas6 and Cas7 are also required for optimal crRNA processing and/or stability. The protein is CRISPR-associated protein Cas7 of Haloferax volcanii (strain ATCC 29605 / DSM 3757 / JCM 8879 / NBRC 14742 / NCIMB 2012 / VKM B-1768 / DS2) (Halobacterium volcanii).